The sequence spans 229 residues: Transmembrane emp24 domain-containing protein 5 (229 aa).

The signal sequence occupies residues 1 to 27 (MGVRMWLPFPMLLLSALPATLLSGAAG). Residues 28-196 (FTPSLDSDFT…IQESNFDRVN (169 aa)) are Lumenal-facing. Residues 45–126 (KECFYQPMPL…EKVIFFELIL (82 aa)) form the GOLD domain. A helical transmembrane segment spans residues 197 to 217 (FWSVVNLMVMVVVSAIQVYTL). Topologically, residues 218 to 229 (KSLFEDKRKSRT) are cytoplasmic.

It belongs to the EMP24/GP25L family. As to quaternary structure, interacts with TMED9 and TMED10.

It is found in the endoplasmic reticulum membrane. The protein resides in the golgi apparatus. It localises to the cis-Golgi network membrane. The protein localises to the endoplasmic reticulum-Golgi intermediate compartment membrane. Functionally, potential role in vesicular protein trafficking, mainly in the early secretory pathway. Required for the maintenance of the Golgi apparatus; involved in protein exchange between Golgi stacks during assembly. Probably not required for COPI-vesicle-mediated retrograde transport. In Rattus norvegicus (Rat), this protein is Transmembrane emp24 domain-containing protein 5 (Tmed5).